The chain runs to 382 residues: Dual-specificity RNA methyltransferase RlmN (382 aa).

Glu-94 (proton acceptor) is an active-site residue. The Radical SAM core domain maps to 100–336 (EANRGTLCVS…NTITRKTRGD (237 aa)). Cysteines 107 and 342 form a disulfide. The [4Fe-4S] cluster site is built by Cys-114, Cys-118, and Cys-121. S-adenosyl-L-methionine contacts are provided by residues 168–169 (GE), Ser-200, 222–224 (SLH), and Asn-299. The active-site S-methylcysteine intermediate is the Cys-342.

Belongs to the radical SAM superfamily. RlmN family. [4Fe-4S] cluster is required as a cofactor.

The protein localises to the cytoplasm. It carries out the reaction adenosine(2503) in 23S rRNA + 2 reduced [2Fe-2S]-[ferredoxin] + 2 S-adenosyl-L-methionine = 2-methyladenosine(2503) in 23S rRNA + 5'-deoxyadenosine + L-methionine + 2 oxidized [2Fe-2S]-[ferredoxin] + S-adenosyl-L-homocysteine. The enzyme catalyses adenosine(37) in tRNA + 2 reduced [2Fe-2S]-[ferredoxin] + 2 S-adenosyl-L-methionine = 2-methyladenosine(37) in tRNA + 5'-deoxyadenosine + L-methionine + 2 oxidized [2Fe-2S]-[ferredoxin] + S-adenosyl-L-homocysteine. In terms of biological role, specifically methylates position 2 of adenine 2503 in 23S rRNA and position 2 of adenine 37 in tRNAs. m2A2503 modification seems to play a crucial role in the proofreading step occurring at the peptidyl transferase center and thus would serve to optimize ribosomal fidelity. The chain is Dual-specificity RNA methyltransferase RlmN from Legionella pneumophila (strain Paris).